We begin with the raw amino-acid sequence, 1954 residues long: Integrin beta-like protein C (1954 aa).

A signal peptide spans 1-20 (MNKLFYLFILIASLFILTDA). The Extracellular portion of the chain corresponds to 21-1883 (SHFRFGTISW…TTTQTNDNKT (1863 aa)). N-linked (GlcNAc...) asparagine glycosylation is found at asparagine 138 and asparagine 354. Residues 428–465 (YGENCVAVPPCVNGVPNSGINGDGKCLCSNGWTGADCS) enclose the EGF-like domain. Disulfide bonds link cysteine 438/cysteine 453 and cysteine 455/cysteine 464. A glycan (N-linked (GlcNAc...) asparagine) is linked at asparagine 479. The 186-residue stretch at 521–706 (DVYVLVDANL…TGVKNVLSKI (186 aa)) folds into the VWFA domain. 9 N-linked (GlcNAc...) asparagine glycosylation sites follow: asparagine 1348, asparagine 1382, asparagine 1628, asparagine 1678, asparagine 1742, asparagine 1770, asparagine 1820, asparagine 1860, and asparagine 1881. Residues 1884–1904 (VLTGAIAGAAAGTALIAAAAW) form a helical membrane-spanning segment. Residues 1905–1954 (RLLRKAAPPTDTFFSEAAFLGDGVSSNPLYEQSASAAENPLYQSASDTTD) are Cytoplasmic-facing.

The protein belongs to the SIB family. Interacts with talA/talin.

Its subcellular location is the membrane. Functionally, implicated in cellular adhesion. This chain is Integrin beta-like protein C (sibC), found in Dictyostelium discoideum (Social amoeba).